We begin with the raw amino-acid sequence, 252 residues long: Phosphoribosylaminoimidazole-succinocarboxamide synthase 1 (252 aa).

Belongs to the SAICAR synthetase family.

The catalysed reaction is 5-amino-1-(5-phospho-D-ribosyl)imidazole-4-carboxylate + L-aspartate + ATP = (2S)-2-[5-amino-1-(5-phospho-beta-D-ribosyl)imidazole-4-carboxamido]succinate + ADP + phosphate + 2 H(+). The protein operates within purine metabolism; IMP biosynthesis via de novo pathway; 5-amino-1-(5-phospho-D-ribosyl)imidazole-4-carboxamide from 5-amino-1-(5-phospho-D-ribosyl)imidazole-4-carboxylate: step 1/2. In Caulobacter vibrioides (strain ATCC 19089 / CIP 103742 / CB 15) (Caulobacter crescentus), this protein is Phosphoribosylaminoimidazole-succinocarboxamide synthase 1 (purC1).